The chain runs to 126 residues: Large ribosomal subunit protein bL12 (126 aa).

Positions 104–116 are enriched in basic and acidic residues; the sequence is AKKEDAEKAKAQL. A disordered region spans residues 104-126; the sequence is AKKEDAEKAKAQLEEAGATVELK. Positions 117–126 are enriched in low complexity; it reads EEAGATVELK.

This sequence belongs to the bacterial ribosomal protein bL12 family. As to quaternary structure, homodimer. Part of the ribosomal stalk of the 50S ribosomal subunit. Forms a multimeric L10(L12)X complex, where L10 forms an elongated spine to which 2 to 4 L12 dimers bind in a sequential fashion. Binds GTP-bound translation factors.

In terms of biological role, forms part of the ribosomal stalk which helps the ribosome interact with GTP-bound translation factors. Is thus essential for accurate translation. This chain is Large ribosomal subunit protein bL12, found in Bifidobacterium animalis subsp. lactis (strain AD011).